Reading from the N-terminus, the 186-residue chain is Periplasmic nitrate reductase, electron transfer subunit (186 aa).

A signal peptide spans 1 to 20 (MKTSKLNFLTLVASTGLALA). Heme c is bound by residues H87, C102, C105, H106, H123, C144, C147, and H148.

The protein belongs to the NapB family. Component of the periplasmic nitrate reductase NapAB complex composed of NapA and NapB. In terms of processing, binds 2 heme C groups per subunit.

It localises to the periplasm. Functionally, electron transfer subunit of the periplasmic nitrate reductase complex NapAB. Transfers electrons to NapA subunit, thus allowing electron flow between membrane and periplasm. Essential for periplasmic nitrate reduction with nitrate as the terminal electron acceptor. This Wolinella succinogenes (strain ATCC 29543 / DSM 1740 / CCUG 13145 / JCM 31913 / LMG 7466 / NCTC 11488 / FDC 602W) (Vibrio succinogenes) protein is Periplasmic nitrate reductase, electron transfer subunit.